Reading from the N-terminus, the 151-residue chain is MERALLILKPDAVQRGLIGAIISRFEQRGLKFQGLKLMQVDEALARRHYAEHEGKSFFNGLVSYITSAPVVVAVVAGKPGTVELVRAMVGATNPAKAAPGTIRGDFGVDIGRNLIHASDSPESGERETAIFFQPHELIGEWNRALDNWIYE.

The ATP site is built by Lys-9, Phe-57, Arg-86, Thr-92, Arg-103, and Asn-113. Catalysis depends on His-116, which acts as the Pros-phosphohistidine intermediate.

This sequence belongs to the NDK family. Homotetramer. Requires Mg(2+) as cofactor.

Its subcellular location is the cytoplasm. It catalyses the reaction a 2'-deoxyribonucleoside 5'-diphosphate + ATP = a 2'-deoxyribonucleoside 5'-triphosphate + ADP. It carries out the reaction a ribonucleoside 5'-diphosphate + ATP = a ribonucleoside 5'-triphosphate + ADP. In terms of biological role, major role in the synthesis of nucleoside triphosphates other than ATP. The ATP gamma phosphate is transferred to the NDP beta phosphate via a ping-pong mechanism, using a phosphorylated active-site intermediate. This is Nucleoside diphosphate kinase from Chloroflexus aurantiacus (strain ATCC 29364 / DSM 637 / Y-400-fl).